Here is a 372-residue protein sequence, read N- to C-terminus: MSAPNHSYDPVEVTPLHPDEVARMRDEALEAIAKASTLEELKKVRIAHAGDRSPLALANREIGALPPAARADAGRRVGGARREVNEALKARQAQLEEEHEARVLVEETVDVTLPYDRIPRGARHPLTTIAERMADIFVGMGFEIAEGPEVEAEWYNFDALNFLPDHPARTMQDTFFIAGPDGEESGMVLRTHTSPVQVRALLDRELPVYVVVPGRTFRTDELDATHSPVFHQLEGLVVDEGITLAHLRGAIQLFVERMFGEGLRTRMRPSYFPFTEPSAEVDMECFVCRGASVGNPEAPCRTCSSEGWIEIGGCGVVNPRVLVAAGVDTERYSGWAFGLGIERTLMFAHGVKDMHDMVEGDVRFTAAFGMEM.

Mg(2+) is bound at residue glutamate 276.

Belongs to the class-II aminoacyl-tRNA synthetase family. Phe-tRNA synthetase alpha subunit type 1 subfamily. As to quaternary structure, tetramer of two alpha and two beta subunits. The cofactor is Mg(2+).

Its subcellular location is the cytoplasm. The enzyme catalyses tRNA(Phe) + L-phenylalanine + ATP = L-phenylalanyl-tRNA(Phe) + AMP + diphosphate + H(+). The polypeptide is Phenylalanine--tRNA ligase alpha subunit (Thermobifida fusca (strain YX)).